The following is a 155-amino-acid chain: MAVYKIVELGDRILKERAKEVPKINQNIIKLLDNMAETMYHARGVGLAAPQIGVSKRVIVVDVGEGLLEMINPVITSCAGHETDSEGCLSIPGIVGDVTRASVIEVKGLDRRGKPLEVKAKGYLARALQHEIDHLDGILFIEKAKNIRKLVPKED.

2 residues coordinate Fe cation: Cys88 and His130. Glu131 is an active-site residue. His134 serves as a coordination point for Fe cation.

Belongs to the polypeptide deformylase family. Fe(2+) serves as cofactor.

The catalysed reaction is N-terminal N-formyl-L-methionyl-[peptide] + H2O = N-terminal L-methionyl-[peptide] + formate. In terms of biological role, removes the formyl group from the N-terminal Met of newly synthesized proteins. Requires at least a dipeptide for an efficient rate of reaction. N-terminal L-methionine is a prerequisite for activity but the enzyme has broad specificity at other positions. This is Peptide deformylase from Pelotomaculum thermopropionicum (strain DSM 13744 / JCM 10971 / SI).